We begin with the raw amino-acid sequence, 363 residues long: UDP-N-acetylglucosamine--N-acetylmuramyl-(pentapeptide) pyrophosphoryl-undecaprenol N-acetylglucosamine transferase (363 aa).

UDP-N-acetyl-alpha-D-glucosamine contacts are provided by residues 12–14, arginine 166, serine 196, and glutamine 291; that span reads TAG.

This sequence belongs to the glycosyltransferase 28 family. MurG subfamily.

It localises to the cell inner membrane. The catalysed reaction is di-trans,octa-cis-undecaprenyl diphospho-N-acetyl-alpha-D-muramoyl-L-alanyl-D-glutamyl-meso-2,6-diaminopimeloyl-D-alanyl-D-alanine + UDP-N-acetyl-alpha-D-glucosamine = di-trans,octa-cis-undecaprenyl diphospho-[N-acetyl-alpha-D-glucosaminyl-(1-&gt;4)]-N-acetyl-alpha-D-muramoyl-L-alanyl-D-glutamyl-meso-2,6-diaminopimeloyl-D-alanyl-D-alanine + UDP + H(+). It functions in the pathway cell wall biogenesis; peptidoglycan biosynthesis. Functionally, cell wall formation. Catalyzes the transfer of a GlcNAc subunit on undecaprenyl-pyrophosphoryl-MurNAc-pentapeptide (lipid intermediate I) to form undecaprenyl-pyrophosphoryl-MurNAc-(pentapeptide)GlcNAc (lipid intermediate II). This chain is UDP-N-acetylglucosamine--N-acetylmuramyl-(pentapeptide) pyrophosphoryl-undecaprenol N-acetylglucosamine transferase, found in Legionella pneumophila (strain Paris).